A 429-amino-acid polypeptide reads, in one-letter code: Enolase (429 aa).

Gln-162 provides a ligand contact to (2R)-2-phosphoglycerate. Glu-204 serves as the catalytic Proton donor. Mg(2+)-binding residues include Asp-241, Glu-288, and Asp-315. Positions 340, 369, 370, and 391 each coordinate (2R)-2-phosphoglycerate. Residue Lys-340 is the Proton acceptor of the active site.

This sequence belongs to the enolase family. Mg(2+) serves as cofactor.

The protein resides in the cytoplasm. It localises to the secreted. It is found in the cell surface. The catalysed reaction is (2R)-2-phosphoglycerate = phosphoenolpyruvate + H2O. It functions in the pathway carbohydrate degradation; glycolysis; pyruvate from D-glyceraldehyde 3-phosphate: step 4/5. Catalyzes the reversible conversion of 2-phosphoglycerate (2-PG) into phosphoenolpyruvate (PEP). It is essential for the degradation of carbohydrates via glycolysis. The sequence is that of Enolase from Bacteroides fragilis (strain ATCC 25285 / DSM 2151 / CCUG 4856 / JCM 11019 / LMG 10263 / NCTC 9343 / Onslow / VPI 2553 / EN-2).